The primary structure comprises 634 residues: Chaperone protein HtpG (634 aa).

The tract at residues 1–344 (MSETVSQNKE…SNDLPLNVSR (344 aa)) is a; substrate-binding. Residues 345-561 (EILQDNKVTQ…DYEMGTQMAK (217 aa)) are b. Positions 562–634 (LLAAAGQAVP…GAINKLLTKV (73 aa)) are c.

The protein belongs to the heat shock protein 90 family. Homodimer.

It localises to the cytoplasm. Functionally, molecular chaperone. Has ATPase activity. In Vibrio parahaemolyticus serotype O3:K6 (strain RIMD 2210633), this protein is Chaperone protein HtpG.